The primary structure comprises 390 residues: Galactokinase (390 aa).

Position 34-37 (34-37) interacts with substrate; the sequence is EHTD. ATP is bound by residues S68 and 122-128; that span reads GSGLSSS. Mg(2+) contacts are provided by S128 and E160. Catalysis depends on D172, which acts as the Proton acceptor. Position 221 (Y221) interacts with substrate.

Belongs to the GHMP kinase family. GalK subfamily.

It localises to the cytoplasm. The catalysed reaction is alpha-D-galactose + ATP = alpha-D-galactose 1-phosphate + ADP + H(+). It participates in carbohydrate metabolism; galactose metabolism. Catalyzes the transfer of the gamma-phosphate of ATP to D-galactose to form alpha-D-galactose-1-phosphate (Gal-1-P). This chain is Galactokinase, found in Chloroflexus aggregans (strain MD-66 / DSM 9485).